Here is a 459-residue protein sequence, read N- to C-terminus: MNILRGDNLNRDTIVALSTPPGIGAIAIIRISGNKSLELTEKTIKNKKINIKTLEERRINHGYFYDENGEIIDEIMFVYFKSPRSYTGEDMVEIYCHGGILVTNKIIDTLLKLGARLAENGEFTRRAFLNGKIDLIKAESILQIIEAKSEKSLKLALDNLKGKLSNEIEYLRSSLINVLSKIEVSIDYGDDIDVPKEEILNDLINVQSFLKEKIKHADKGLHISTGVTMAIVGKPNVGKSTLLNRLLVEDRAIVTDIPGTTRDVIKGELKIKGVHFIISDTAGIRMTEDKVEKIGIEKALNEAKKSDVILFLLDATTGFTNEDEYIYNLIKDCNFIPVWNKIDIAEKVDKDIVFLRNSVVISAETGRGMRELEEKILESVKVLVEDGELSHVTSKRQLEYLKRVEYNIIKAINSLKKNMPLDIISIDIRNGLEQLDELMGRNFTEDLLDNIFSNFCVGK.

The (6S)-5-formyl-5,6,7,8-tetrahydrofolate site is built by Arg30, Glu93, and Lys132. Residues 226 to 381 (GVTMAIVGKP…LEEKILESVK (156 aa)) form the TrmE-type G domain. Asn236 contacts K(+). GTP is bound by residues 236–241 (NVGKST), 255–261 (TDIPGTT), and 280–283 (DTAG). Ser240 is a binding site for Mg(2+). K(+)-binding residues include Thr255, Ile257, and Thr260. Mg(2+) is bound at residue Thr261. Residue Lys459 coordinates (6S)-5-formyl-5,6,7,8-tetrahydrofolate.

Belongs to the TRAFAC class TrmE-Era-EngA-EngB-Septin-like GTPase superfamily. TrmE GTPase family. Homodimer. Heterotetramer of two MnmE and two MnmG subunits. K(+) serves as cofactor.

It is found in the cytoplasm. Exhibits a very high intrinsic GTPase hydrolysis rate. Involved in the addition of a carboxymethylaminomethyl (cmnm) group at the wobble position (U34) of certain tRNAs, forming tRNA-cmnm(5)s(2)U34. The sequence is that of tRNA modification GTPase MnmE from Fervidobacterium nodosum (strain ATCC 35602 / DSM 5306 / Rt17-B1).